The chain runs to 754 residues: 1,4-alpha-glucan branching enzyme GlgB (754 aa).

Asp-431 serves as the catalytic Nucleophile. Residue Glu-484 is the Proton donor of the active site.

Belongs to the glycosyl hydrolase 13 family. GlgB subfamily. Monomer.

The catalysed reaction is Transfers a segment of a (1-&gt;4)-alpha-D-glucan chain to a primary hydroxy group in a similar glucan chain.. The protein operates within glycan biosynthesis; glycogen biosynthesis. In terms of biological role, catalyzes the formation of the alpha-1,6-glucosidic linkages in glycogen by scission of a 1,4-alpha-linked oligosaccharide from growing alpha-1,4-glucan chains and the subsequent attachment of the oligosaccharide to the alpha-1,6 position. In Prochlorococcus marinus (strain MIT 9301), this protein is 1,4-alpha-glucan branching enzyme GlgB.